The chain runs to 381 residues: N-acetyl-alpha-D-glucosaminyl L-malate synthase (381 aa).

The (S)-malate site is built by serine 16, tyrosine 94, and threonine 122. Residues asparagine 206, glutamine 262, and glutamate 290 each contribute to the UDP site.

Belongs to the glycosyltransferase group 1 family. Glycosyltransferase 4 subfamily. In terms of assembly, dimer of tetramers.

The catalysed reaction is (S)-malate + UDP-N-acetyl-alpha-D-glucosamine = (S)-malyl N-acetyl-alpha-D-glucosaminide + UDP + H(+). Involved in bacillithiol (BSH) biosynthesis. Catalyzes the first step of the pathway, the formation of N-acetylglucosaminylmalate (GlcNAc-Mal) from UDP-N-acetylglucosamine (UDP-GlcNAc) and L-malate. The polypeptide is N-acetyl-alpha-D-glucosaminyl L-malate synthase (Bacillus anthracis).